A 130-amino-acid chain; its full sequence is Large ribosomal subunit protein eL32 (130 aa).

The protein belongs to the eukaryotic ribosomal protein eL32 family.

The chain is Large ribosomal subunit protein eL32 (rpl32e) from Pyrococcus abyssi (strain GE5 / Orsay).